The chain runs to 459 residues: Flavin-containing monooxygenase FMO GS-OX1 (459 aa).

FAD is bound at residue 17-22 (GAGAAG). Residue 211–216 (GNYASG) participates in NADP(+) binding.

Belongs to the FMO family. The cofactor is FAD. Mainly expressed in leaves. Low levels in flowers and seeds.

The catalysed reaction is a (Z)-omega-(methylsulfanyl)-N-sulfo-alkylhydroximate S-glucoside + NADPH + O2 + H(+) = a (Z)-omega-(methylsulfinyl)-alkyl-glucosinolate + NADP(+) + H2O. Functionally, catalyzes the conversion of methylthioalkyl glucosinolates into methylsulfinylalkyl glucosinolates. Able to S-oxygenate both desulfo- and intact 4-methylthiobutyl glucosinolates, but no activity with methionine, dihomomethionine or 5-methylthiopentaldoxime. This chain is Flavin-containing monooxygenase FMO GS-OX1 (FMOGS-OX1), found in Arabidopsis thaliana (Mouse-ear cress).